Consider the following 277-residue polypeptide: Sulfur carrier protein FdhD (277 aa).

Cys-121 serves as the catalytic Cysteine persulfide intermediate. 260-265 (FCKPGR) serves as a coordination point for Mo-bis(molybdopterin guanine dinucleotide).

Belongs to the FdhD family.

Its subcellular location is the cytoplasm. Required for formate dehydrogenase (FDH) activity. Acts as a sulfur carrier protein that transfers sulfur from IscS to the molybdenum cofactor prior to its insertion into FDH. The polypeptide is Sulfur carrier protein FdhD (Shigella flexneri serotype 5b (strain 8401)).